A 182-amino-acid polypeptide reads, in one-letter code: Adenylate kinase (182 aa).

Position 12–17 (12–17 (GAGKGT)) interacts with ATP. The interval 32–61 (STGELLRKEIEMNTALGIQVKDIMNRGELV) is NMP. AMP is bound by residues threonine 33, arginine 38, 59-61 (ELV), 85-88 (GYPR), and glutamine 92. Residues 126-132 (LRGRKDD) form an LID region. An ATP-binding site is contributed by arginine 127. AMP contacts are provided by arginine 129 and arginine 140. Residue arginine 168 participates in ATP binding.

This sequence belongs to the adenylate kinase family. In terms of assembly, monomer.

It localises to the cytoplasm. It carries out the reaction AMP + ATP = 2 ADP. The protein operates within purine metabolism; AMP biosynthesis via salvage pathway; AMP from ADP: step 1/1. Its function is as follows. Catalyzes the reversible transfer of the terminal phosphate group between ATP and AMP. Plays an important role in cellular energy homeostasis and in adenine nucleotide metabolism. This is Adenylate kinase from Prochlorococcus marinus (strain MIT 9301).